Here is a 127-residue protein sequence, read N- to C-terminus: Large ribosomal subunit protein bL20 (127 aa).

Belongs to the bacterial ribosomal protein bL20 family.

Its function is as follows. Binds directly to 23S ribosomal RNA and is necessary for the in vitro assembly process of the 50S ribosomal subunit. It is not involved in the protein synthesizing functions of that subunit. This chain is Large ribosomal subunit protein bL20, found in Corynebacterium aurimucosum (strain ATCC 700975 / DSM 44827 / CIP 107346 / CN-1) (Corynebacterium nigricans).